We begin with the raw amino-acid sequence, 202 residues long: FMN-dependent NADH:quinone oxidoreductase (202 aa).

FMN-binding positions include S10, 16 to 18 (SHS), and 96 to 99 (MYNF).

This sequence belongs to the azoreductase type 1 family. Homodimer. It depends on FMN as a cofactor.

The enzyme catalyses 2 a quinone + NADH + H(+) = 2 a 1,4-benzosemiquinone + NAD(+). The catalysed reaction is N,N-dimethyl-1,4-phenylenediamine + anthranilate + 2 NAD(+) = 2-(4-dimethylaminophenyl)diazenylbenzoate + 2 NADH + 2 H(+). Its function is as follows. Quinone reductase that provides resistance to thiol-specific stress caused by electrophilic quinones. Functionally, also exhibits azoreductase activity. Catalyzes the reductive cleavage of the azo bond in aromatic azo compounds to the corresponding amines. The sequence is that of FMN-dependent NADH:quinone oxidoreductase from Hydrogenovibrio crunogenus (strain DSM 25203 / XCL-2) (Thiomicrospira crunogena).